We begin with the raw amino-acid sequence, 391 residues long: Small ribosomal subunit protein mS29 (391 aa).

A mitochondrion-targeting transit peptide spans 1–17; the sequence is MLTGITRLFSRVQKLDP. A disordered region spans residues 30 to 59; that stretch reads NSQVPAERPRTVSRTSDSDPAKHGEQHEGQ. A compositionally biased stretch (basic and acidic residues) spans 45–59; it reads SDSDPAKHGEQHEGQ. An N6-acetyllysine mark is found at Lys-168 and Lys-200.

The protein belongs to the mitochondrion-specific ribosomal protein mS29 family. As to quaternary structure, component of the mitochondrial ribosome small subunit (28S) which comprises a 12S rRNA and about 30 distinct proteins. Interacts with DELE1. Interacts with NOA1.

The protein resides in the mitochondrion. It carries out the reaction GTP + H2O = GDP + phosphate + H(+). In terms of biological role, as a component of the mitochondrial small ribosomal subunit, it plays a role in the translation of mitochondrial mRNAs. Involved in mediating interferon-gamma-induced cell death. Displays GTPase activity in vitro. This is Small ribosomal subunit protein mS29 from Mus musculus (Mouse).